The chain runs to 618 residues: Rho guanine nucleotide exchange factor 25 (618 aa).

Disordered regions lie at residues 26–63 and 169–193; these read CAVP…REPE and GPGD…EEQK. Residues 199 to 375 enclose the DH domain; it reads RSMFVLGELV…CFVPKRCNDM (177 aa). Residues 317–338 form an important for binding to Rho GTPases region; it reads LGHRLQLNDLLIKPVQRIMKYQ. Residues 387 to 505 enclose the PH domain; the sequence is KLTAQGKLLG…WIKQVAQILE (119 aa). The tract at residues 506-532 is sufficient to bind activated GNAQ; sequence SQRDFLNALQSPIEYQRRESQTNSLGR. Disordered stretches follow at residues 521–556 and 584–604; these read QRRE…SMHT and ALSD…VNTP. A compositionally biased stretch (polar residues) spans 584–593; that stretch reads ALSDTPQTPH.

Interacts with activated GNAQ and GNA11. Interacts (via the DH domain) with POPDC1 (via the C-terminus cytoplasmic tail). Interacts with RHOA, CDC42 and RAC1. Highly expressed in excitable tissues, such as brain, heart and muscle. Elevated expression in hippocampus and cerebellum.

The protein resides in the cytoplasm. It is found in the myofibril. The protein localises to the sarcomere. It localises to the cell membrane. May play a role in actin cytoskeleton reorganization in different tissues since its activation induces formation of actin stress fibers. It works as a guanine nucleotide exchange factor for Rho family of small GTPases. Links specifically G alpha q/11-coupled receptors to RHOA activation. May be an important regulator of processes involved in axon and dendrite formation. In neurons seems to be an exchange factor primarily for RAC1. Involved in skeletal myogenesis. This chain is Rho guanine nucleotide exchange factor 25 (Arhgef25), found in Mus musculus (Mouse).